We begin with the raw amino-acid sequence, 1129 residues long: PAN2-PAN3 deadenylation complex catalytic subunit PAN2 (1129 aa).

5 WD repeats span residues Pro-20–Tyr-60, Pro-104–Pro-146, Asp-148–Val-183, Gly-186–Lys-226, and Leu-280–Glu-319. Positions Tyr-320–Lys-457 are linker. The interval Arg-396–Arg-427 is disordered. Positions Asp-458 to Lys-830 constitute a USP domain. The Exonuclease domain maps to Val-880–Leu-1052. A divalent metal cation is bound by residues Asp-883, Glu-885, Asp-992, and Asp-1045. The segment at Ala-1083–Arg-1129 is disordered.

The protein belongs to the peptidase C19 family. PAN2 subfamily. As to quaternary structure, forms a heterotrimer with an asymmetric homodimer of the regulatory subunit PAN3 to form the poly(A)-nuclease (PAN) deadenylation complex. The cofactor is a divalent metal cation.

It is found in the cytoplasm. The catalysed reaction is Exonucleolytic cleavage of poly(A) to 5'-AMP.. With respect to regulation, positively regulated by the regulatory subunit PAN3. Its function is as follows. Catalytic subunit of the poly(A)-nuclease (PAN) deadenylation complex, one of two cytoplasmic mRNA deadenylases involved in mRNA turnover. PAN specifically shortens poly(A) tails of RNA and the activity is stimulated by poly(A)-binding protein PAB1. PAN deadenylation is followed by rapid degradation of the shortened mRNA tails by the CCR4-NOT complex. Deadenylated mRNAs are then degraded by two alternative mechanisms, namely exosome-mediated 3'-5' exonucleolytic degradation, or deadenylation-dependent mRNA decaping and subsequent 5'-3' exonucleolytic degradation by XRN1. May also be involved in post-transcriptional maturation of mRNA poly(A) tails. The polypeptide is PAN2-PAN3 deadenylation complex catalytic subunit PAN2 (Phaeosphaeria nodorum (strain SN15 / ATCC MYA-4574 / FGSC 10173) (Glume blotch fungus)).